Consider the following 91-residue polypeptide: NADH-ubiquinone oxidoreductase chain 4L (91 aa).

A run of 2 helical transmembrane segments spans residues 2–22 (LIMI…QTHL) and 38–58 (LGLG…ALVL).

It belongs to the complex I subunit 4L family.

The protein localises to the mitochondrion membrane. The catalysed reaction is a ubiquinone + NADH + 5 H(+)(in) = a ubiquinol + NAD(+) + 4 H(+)(out). Core subunit of the mitochondrial membrane respiratory chain NADH dehydrogenase (Complex I) that is believed to belong to the minimal assembly required for catalysis. Complex I functions in the transfer of electrons from NADH to the respiratory chain. The immediate electron acceptor for the enzyme is believed to be ubiquinone. The sequence is that of NADH-ubiquinone oxidoreductase chain 4L (ND4L) from Branchiostoma floridae (Florida lancelet).